A 135-amino-acid chain; its full sequence is Protein PsiE homolog (135 aa).

4 helical membrane-spanning segments follow: residues 14 to 34 (LQTI…IFLV), 54 to 74 (YQLI…ALIV), 82 to 102 (HFPL…LIIV), and 107 to 127 (PSDT…LYLA).

The protein belongs to the PsiE family.

The protein resides in the cell inner membrane. The sequence is that of Protein PsiE homolog from Pectobacterium carotovorum subsp. carotovorum (strain PC1).